A 185-amino-acid chain; its full sequence is Ribosome-recycling factor (185 aa).

The protein belongs to the RRF family.

It localises to the cytoplasm. Its function is as follows. Responsible for the release of ribosomes from messenger RNA at the termination of protein biosynthesis. May increase the efficiency of translation by recycling ribosomes from one round of translation to another. In Francisella tularensis subsp. tularensis (strain FSC 198), this protein is Ribosome-recycling factor.